The following is a 156-amino-acid chain: SsrA-binding protein (156 aa).

Belongs to the SmpB family.

It localises to the cytoplasm. Functionally, required for rescue of stalled ribosomes mediated by trans-translation. Binds to transfer-messenger RNA (tmRNA), required for stable association of tmRNA with ribosomes. tmRNA and SmpB together mimic tRNA shape, replacing the anticodon stem-loop with SmpB. tmRNA is encoded by the ssrA gene; the 2 termini fold to resemble tRNA(Ala) and it encodes a 'tag peptide', a short internal open reading frame. During trans-translation Ala-aminoacylated tmRNA acts like a tRNA, entering the A-site of stalled ribosomes, displacing the stalled mRNA. The ribosome then switches to translate the ORF on the tmRNA; the nascent peptide is terminated with the 'tag peptide' encoded by the tmRNA and targeted for degradation. The ribosome is freed to recommence translation, which seems to be the essential function of trans-translation. This chain is SsrA-binding protein, found in Staphylococcus carnosus (strain TM300).